The sequence spans 418 residues: Nuclear hormone receptor 114 (418 aa).

Positions 12-87 (DHVCLVCQDF…VGMDRNALQQ (76 aa)) form a DNA-binding region, nuclear receptor. 2 consecutive NR C4-type zinc fingers follow at residues 15 to 35 (CLVC…CVGC) and 51 to 70 (CQFE…CRYC). The segment at 89 to 130 (RDPIGYTKRTRRPKKELKTTSDCSSDEGASTPPSVSPLQLSP) is disordered. Positions 170 to 409 (PIRSLHEALC…AFARQLFFGD (240 aa)) constitute an NR LBD domain. The tract at residues 398-409 (FSAFARQLFFGD) is AF-2.

It belongs to the nuclear hormone receptor family. As to expression, expressed in germ and intestinal cells and at low levels in the hypodermis.

The protein resides in the nucleus. Probable transcription factor which may have a role in detoxifying dietary metabolites arising from bacterial tryptophan metabolism. Required for fertility and involved in proper postembryonic germline development, especially germline stem cell (GSC) proliferation. Required for activation of the methionine/S-adenosylmethionine (Met/SAM) cycle in response to low levels of SAM. The protein is Nuclear hormone receptor 114 of Caenorhabditis elegans.